The chain runs to 1176 residues: Leucine--tRNA ligase, cytoplasmic (1176 aa).

The L-leucine site is built by Tyr52 and Tyr54. Residues 60 to 63 (HLGH) carry the 'HIGH' region motif. Position 167 is a phosphoserine (Ser167). The tract at residues 260–509 (GPQEYTLLKL…DAGDALIYME (250 aa)) is editing domain. Positions 594 and 597 each coordinate L-leucine. The short motif at 716–720 (KMSKS) is the 'KMSKS' region element. Position 719 (Lys719) interacts with ATP. At Ser720 the chain carries Phosphoserine. 2 positions are modified to N6-acetyllysine: Lys970 and Lys1047.

The protein belongs to the class-I aminoacyl-tRNA synthetase family. In terms of assembly, part of the aminoacyl-tRNA synthetase multienzyme complex, also known as multisynthetase complex (MSC), that is composed of the aminoacyl-tRNA ligases for Arg (RARS1), Asp (DARS1), Gln (QARS1), Ile (IARS1), Leu (LARS1), Lys (KARS1), Met (MARS1) the bifunctional ligase for Glu and Pro (EPRS1) and the auxiliary subunits AIMP1/p43, AIMP2/p38 and EEF1E1/p18.

It is found in the cytoplasm. The enzyme catalyses tRNA(Leu) + L-leucine + ATP = L-leucyl-tRNA(Leu) + AMP + diphosphate. It catalyses the reaction L-methionyl-tRNA(Leu) + H2O = tRNA(Leu) + L-methionine + H(+). Its activity is regulated as follows. 5-fluoro-1,3-dihydro-1-hydroxy-1,2-benzoxaborole inhibits LARS1 by forming a covalent adduct with the 3' adenosine of tRNA(Leu) at the editing site, thus locking the enzyme in an inactive conformation. In terms of biological role, aminoacyl-tRNA synthetase that catalyzes the specific attachment of leucine to its cognate tRNA (tRNA(Leu)). It performs tRNA aminoacylation in a two-step reaction: Leu is initially activated by ATP to form a leucyl-adenylate (Leu-AMP) intermediate; then the leucyl moiety is transferred to the acceptor 3' end of the tRNA to yield leucyl-tRNA. To improve the fidelity of catalytic reactions, it is also able to hydrolyze misactivated aminoacyl-adenylate intermediates (pre-transfer editing) and mischarged aminoacyl-tRNAs (post-transfer editing). In Homo sapiens (Human), this protein is Leucine--tRNA ligase, cytoplasmic.